Consider the following 160-residue polypeptide: MSVLKKPDLTDPKLRAKLAKGMGHNYYGEPAWPNDLLYIFPVVILGTLACVIGLSVLAPSPIGEKADPFATPLEILPEWYFFPTFNLLRVIPNKLLGVLSMAAVPVGLITVPFIESVNKFQNPFRRPVAMTVFVFSVVFAIWLGIGATMPINKALTLGLF.

The next 3 membrane-spanning stretches (helical) occupy residues 36–56, 95–115, and 127–147; these read LLYIFPVVILGTLACVIGLSV, LLGVLSMAAVPVGLITVPFIE, and PVAMTVFVFSVVFAIWLGIGA.

This sequence belongs to the cytochrome b family. PetD subfamily. In terms of assembly, the 4 large subunits of the cytochrome b6-f complex are cytochrome b6, subunit IV (17 kDa polypeptide, petD), cytochrome f and the Rieske protein, while the 4 small subunits are petG, petL, petM and petN. The complex functions as a dimer.

The protein resides in the plastid. The protein localises to the chloroplast thylakoid membrane. In terms of biological role, component of the cytochrome b6-f complex, which mediates electron transfer between photosystem II (PSII) and photosystem I (PSI), cyclic electron flow around PSI, and state transitions. The polypeptide is Cytochrome b6-f complex subunit 4 (Guillardia theta (Cryptophyte)).